The following is a 155-amino-acid chain: 6,7-dimethyl-8-ribityllumazine synthase (155 aa).

5-amino-6-(D-ribitylamino)uracil-binding positions include W22, 56–58 (SYE), and 80–82 (AVI). (2S)-2-hydroxy-3-oxobutyl phosphate is bound at residue 85–86 (DT). H88 acts as the Proton donor in catalysis. F113 serves as a coordination point for 5-amino-6-(D-ribitylamino)uracil. R127 contacts (2S)-2-hydroxy-3-oxobutyl phosphate.

Belongs to the DMRL synthase family.

It carries out the reaction (2S)-2-hydroxy-3-oxobutyl phosphate + 5-amino-6-(D-ribitylamino)uracil = 6,7-dimethyl-8-(1-D-ribityl)lumazine + phosphate + 2 H2O + H(+). It participates in cofactor biosynthesis; riboflavin biosynthesis; riboflavin from 2-hydroxy-3-oxobutyl phosphate and 5-amino-6-(D-ribitylamino)uracil: step 1/2. Functionally, catalyzes the formation of 6,7-dimethyl-8-ribityllumazine by condensation of 5-amino-6-(D-ribitylamino)uracil with 3,4-dihydroxy-2-butanone 4-phosphate. This is the penultimate step in the biosynthesis of riboflavin. This Deinococcus radiodurans (strain ATCC 13939 / DSM 20539 / JCM 16871 / CCUG 27074 / LMG 4051 / NBRC 15346 / NCIMB 9279 / VKM B-1422 / R1) protein is 6,7-dimethyl-8-ribityllumazine synthase.